Consider the following 338-residue polypeptide: MKRMIALDGAQGEGGGQILRSALSLSMITGQPFTITGIRAGRAKPGLLRQHLTAVKAAAEICRATVEGAELGSQRLVFRPGTVRGGDYRFAIGSAGSCTLVLQTVLPALWFADGPSRVEVSGGTDNPSAPPADFIRRVLEPLLAKIGVHQQTTLLRHGFYPAGGGVVATEVSPVASFNSLQLGERGNIVQMRGEVLLAGVPRHVAEREIATLAGSFSLHEQNIHNLPRDQGPGNTVSLEVESENITERFFVVGEKRVSAEVVAAQLVKEVKRYLASPAAVGEYLADQLVLPMALAGAGEFTVAHPSCHLQTNIAVVERFLPVRFSLIETDGVTRVSIE.

Residues Gln-103 and 283–287 (YLADQ) contribute to the ATP site. His-308 acts as the Tele-AMP-histidine intermediate in catalysis.

This sequence belongs to the RNA 3'-terminal cyclase family. Type 1 subfamily.

The protein localises to the cytoplasm. The enzyme catalyses a 3'-end 3'-phospho-ribonucleotide-RNA + ATP = a 3'-end 2',3'-cyclophospho-ribonucleotide-RNA + AMP + diphosphate. In terms of biological role, catalyzes the conversion of 3'-phosphate to a 2',3'-cyclic phosphodiester at the end of RNA. The mechanism of action of the enzyme occurs in 3 steps: (A) adenylation of the enzyme by ATP; (B) transfer of adenylate to an RNA-N3'P to produce RNA-N3'PP5'A; (C) and attack of the adjacent 2'-hydroxyl on the 3'-phosphorus in the diester linkage to produce the cyclic end product. The biological role of this enzyme is unknown but it is likely to function in some aspects of cellular RNA processing. This Escherichia coli O81 (strain ED1a) protein is RNA 3'-terminal phosphate cyclase.